The chain runs to 172 residues: Small ribosomal subunit protein uS5 (172 aa).

The 64-residue stretch at 17–80 (LREKMISVNR…EQARRNMFKV (64 aa)) folds into the S5 DRBM domain.

Belongs to the universal ribosomal protein uS5 family. In terms of assembly, part of the 30S ribosomal subunit. Contacts proteins S4 and S8.

With S4 and S12 plays an important role in translational accuracy. In terms of biological role, located at the back of the 30S subunit body where it stabilizes the conformation of the head with respect to the body. This Burkholderia lata (strain ATCC 17760 / DSM 23089 / LMG 22485 / NCIMB 9086 / R18194 / 383) protein is Small ribosomal subunit protein uS5.